The chain runs to 342 residues: MPVSLLDDFLAYTLAGTRPAASEAQGTCAGGVRWSWLDDGVLLMEPAVQEEGMRSVLVSAGVHGDETAPIELLAFLVRDIAHGTAALTGRLLVILGNVDAMRDACRYRDDDLNRLFSGRHLQLPQSHEAPRAAALERAATRFFAAAPDNPGARWHIDMHTAIRASAFEQFALLPHTGKPFSRAMFEWLGEARISAVLLHTTRGNTYSHFTAQACGALACTLELGKVRPFGQNDLTRFAGADHAVRHLLAGMRGEVRAPMPRAFTVIDQITRQSEAFELLVAPDVANFTPFAKDTVLARDGDYRYVVRHDEERLVFPNATVKPGLRAGLMVIETTQDTLSKLV.

Residues H63, E66, and H159 each coordinate Zn(2+). E222 is an active-site residue.

It belongs to the AspA/AstE family. Succinylglutamate desuccinylase subfamily. Zn(2+) is required as a cofactor.

It carries out the reaction N-succinyl-L-glutamate + H2O = L-glutamate + succinate. It functions in the pathway amino-acid degradation; L-arginine degradation via AST pathway; L-glutamate and succinate from L-arginine: step 5/5. Its function is as follows. Transforms N(2)-succinylglutamate into succinate and glutamate. This chain is Succinylglutamate desuccinylase, found in Paraburkholderia xenovorans (strain LB400).